The chain runs to 440 residues: Gamma-aminobutyric acid receptor subunit pi (440 aa).

The signal sequence occupies residues M1–G23. Residues N24–N241 are Extracellular-facing. N-linked (GlcNAc...) asparagine glycosylation is found at N43, N102, and N145. Residues C160 and C174 are joined by a disulfide bond. N-linked (GlcNAc...) asparagine glycans are attached at residues N196 and N228. The helical transmembrane segment at V242 to V262 threads the bilayer. At S263 to S270 the chain is on the cytoplasmic side. Residues V271 to I290 traverse the membrane as a helical segment. Topologically, residues G291–C301 are extracellular. The chain crosses the membrane as a helical span at residues F302–L322. At E323 to K419 the chain is on the cytoplasmic side. A helical transmembrane segment spans residues L420–F440.

This sequence belongs to the ligand-gated ion channel (TC 1.A.9) family. Gamma-aminobutyric acid receptor (TC 1.A.9.5) subfamily. GABRP sub-subfamily. In terms of assembly, heteropentamer, formed by a combination of alpha (GABRA1-6), beta (GABRB1-3), gamma (GABRG1-3), delta (GABRD), epsilon (GABRE), rho (GABRR1-3), pi (GABRP) and theta (GABRQ) chains, each subunit exhibiting distinct physiological and pharmacological properties.

The protein localises to the cell membrane. The protein resides in the apical cell membrane. It carries out the reaction chloride(in) = chloride(out). Functionally, pi subunit of the heteropentameric ligand-gated chloride channel gated by gamma-aminobutyric acid (GABA). GABA-gated chloride channels, also named GABA(A) receptors (GABAAR), consist of five subunits arranged around a central pore and contain GABA active binding site(s) located at the alpha and beta subunit interfaces. When activated by GABA, GABAARs selectively allow the flow of chloride anions across the cell membrane down their electrochemical gradient. Pi-containing GABAARs are mostly located in peripheral tissues. In the uterus, pi subunits modulate uterus contraction by altering the sensitivity of GABAARs to pregnanolone. In the lungs, pi-containing GABAARs contribute to pulmonary fluid transport via luminal secretion of chloride. The sequence is that of Gamma-aminobutyric acid receptor subunit pi from Mus musculus (Mouse).